A 539-amino-acid chain; its full sequence is Phosphoenolpyruvate carboxykinase (ATP) (539 aa).

Substrate-binding residues include Arg-59, Tyr-200, and Lys-206. ATP is bound by residues Lys-206, His-225, and 242–250 (GLSGTGKTT). Mn(2+)-binding residues include Lys-206 and His-225. Residue Asp-263 coordinates Mn(2+). ATP contacts are provided by residues Glu-291, Arg-327, 447 to 448 (RI), and Thr-453. Arg-327 serves as a coordination point for substrate.

It belongs to the phosphoenolpyruvate carboxykinase (ATP) family. It depends on Mn(2+) as a cofactor.

It localises to the cytoplasm. It catalyses the reaction oxaloacetate + ATP = phosphoenolpyruvate + ADP + CO2. Its pathway is carbohydrate biosynthesis; gluconeogenesis. Its function is as follows. Involved in the gluconeogenesis. Catalyzes the conversion of oxaloacetate (OAA) to phosphoenolpyruvate (PEP) through direct phosphoryl transfer between the nucleoside triphosphate and OAA. The protein is Phosphoenolpyruvate carboxykinase (ATP) of Selenomonas ruminantium.